Reading from the N-terminus, the 148-residue chain is Aspartate 1-decarboxylase (148 aa).

Ser-25 acts as the Schiff-base intermediate with substrate; via pyruvic acid in catalysis. Ser-25 carries the post-translational modification Pyruvic acid (Ser). Thr-57 serves as a coordination point for substrate. Tyr-58 functions as the Proton donor in the catalytic mechanism. 73–75 (GAA) is a binding site for substrate.

It belongs to the PanD family. As to quaternary structure, heterooctamer of four alpha and four beta subunits. The cofactor is pyruvate. In terms of processing, is synthesized initially as an inactive proenzyme, which is activated by self-cleavage at a specific serine bond to produce a beta-subunit with a hydroxyl group at its C-terminus and an alpha-subunit with a pyruvoyl group at its N-terminus.

It is found in the cytoplasm. It catalyses the reaction L-aspartate + H(+) = beta-alanine + CO2. It participates in cofactor biosynthesis; (R)-pantothenate biosynthesis; beta-alanine from L-aspartate: step 1/1. Catalyzes the pyruvoyl-dependent decarboxylation of aspartate to produce beta-alanine. This Rhodococcus opacus (strain B4) protein is Aspartate 1-decarboxylase.